The following is a 211-amino-acid chain: Ribosomal RNA small subunit methyltransferase G (211 aa).

S-adenosyl-L-methionine-binding positions include G81, L86, 132 to 133 (AE), and R147.

This sequence belongs to the methyltransferase superfamily. RNA methyltransferase RsmG family.

The protein resides in the cytoplasm. It catalyses the reaction guanosine(527) in 16S rRNA + S-adenosyl-L-methionine = N(7)-methylguanosine(527) in 16S rRNA + S-adenosyl-L-homocysteine. Functionally, specifically methylates the N7 position of guanine in position 527 of 16S rRNA. The sequence is that of Ribosomal RNA small subunit methyltransferase G from Dichelobacter nodosus (strain VCS1703A).